The chain runs to 225 residues: Glutathione S-transferase Mu 5 (225 aa).

The GST N-terminal domain maps to 5 to 92; sequence KSMVLGYWDI…YIARKHNMCG (88 aa). Residue Ser-6 is modified to Phosphoserine. Glutathione is bound by residues 11–12, 50–54, 63–64, and 76–77; these read YW, WLDVK, NL, and QS. Positions 94-212 constitute a GST C-terminal domain; sequence TEEEKIRVDI…QSDRCFKMPI (119 aa). Tyr-120 serves as a coordination point for substrate.

The protein belongs to the GST superfamily. Mu family. As to quaternary structure, homodimer. The N-terminus is blocked. In terms of tissue distribution, expressed in testis and brain. Very low expression in liver, kidney, heart and lung.

The protein resides in the cytoplasm. It catalyses the reaction RX + glutathione = an S-substituted glutathione + a halide anion + H(+). Its function is as follows. Conjugation of reduced glutathione to a wide number of exogenous and endogenous hydrophobic electrophiles. This is Glutathione S-transferase Mu 5 (Gstm5) from Rattus norvegicus (Rat).